The following is a 563-amino-acid chain: MRLRTCLLGLLALCVASKCSYSPEPDQQRTLPPGWVSLGRVDSEEELSLTFALRQQNVERLSKLVQAVSDPGSPHYGKYLTLEDVAELVRPSPLTFRTVQKWLSAAGARNCHSVTTQDFLTCWLSVRQAELLLSGAEFHRYVGGPTEIHVIRSLRPYQLPKALAPHVDFVGGLHRFPPTSSLRQRPEPQVSGTVGLHLGVTPSVIRQRYNLTAQDVGSGTTNNSQACAQFLEQYFHASDLAEFMRLFGGNFAHQASVARVVGQQGRGRAGIEASLDVEYLMSAGANISTWVYSSPGRHESQEPFLQWLLLLSNESALPHVHTVSYGDDEDSLSSAYIQRVNTEFMKAAARGLTLLFASGDSGAGCWSVSRRHQFRPSFPASSPYVTTVGGTSFQNPFRVTTEIVDYISGGGFSNVFPQPSYQEEAVVQFLSSSPHLPPSSYFNASGRAYPDVAALSDGYWVVSNSVPIPWVSGTSASTPVFGGILSLINEHRLLSGLPPLGFLNPRLYQQRGAGLFDVTRGCHESCLNEEVQGQGFCSGPGWDPVTGWGTPNFPALLKALIKP.

A signal peptide spans 1–19 (MRLRTCLLGLLALCVASKC). A propeptide spans 20–195 (SYSPEPDQQR…PEPQVSGTVG (176 aa)) (removed in mature form). Residues Cys111 and Cys122 are joined by a disulfide bond. Residues 199 to 563 (GVTPSVIRQR…PALLKALIKP (365 aa)) form the Peptidase S53 domain. N-linked (GlcNAc...) asparagine glycosylation is found at Asn210 and Asn222. Active-site charge relay system residues include Glu272 and Asp276. 3 N-linked (GlcNAc...) asparagine glycosylation sites follow: Asn286, Asn313, and Asn443. Intrachain disulfides connect Cys365-Cys526 and Cys522-Cys537. The active-site Charge relay system is the Ser475. Ca(2+) contacts are provided by Asp517 and Val518. Ca(2+) is bound by residues Gly539, Gly541, and Asp543.

As to quaternary structure, monomer. Interacts with CLN5. Interacts with CLN3. Ca(2+) serves as cofactor. Post-translationally, activated by autocatalytic proteolytical processing upon acidification. N-glycosylation is required for processing and activity.

It is found in the lysosome. It localises to the melanosome. It catalyses the reaction Release of an N-terminal tripeptide from a polypeptide, but also has endopeptidase activity.. In terms of biological role, lysosomal serine protease with tripeptidyl-peptidase I activity. May act as a non-specific lysosomal peptidase which generates tripeptides from the breakdown products produced by lysosomal proteinases. Requires substrates with an unsubstituted N-terminus. The chain is Tripeptidyl-peptidase 1 (TPP1) from Canis lupus familiaris (Dog).